We begin with the raw amino-acid sequence, 362 residues long: Lactosylceramide alpha-2,3-sialyltransferase (362 aa).

Over 1–5 (MRRPS) the chain is Cytoplasmic. The chain crosses the membrane as a helical; Signal-anchor for type II membrane protein span at residues 6-26 (LLLKDILKCTLLVFGVWILYI). The Lumenal segment spans residues 27-362 (LKLNYTTEEC…DLSGGIDREF (336 aa)). N-linked (GlcNAc...) asparagine glycans are attached at residues Asn-30, Asn-180, Asn-224, and Asn-334. Cys-139 and Cys-297 are disulfide-bonded.

This sequence belongs to the glycosyltransferase 29 family.

The protein localises to the golgi apparatus membrane. It catalyses the reaction a beta-D-Gal-(1-&gt;4)-beta-D-Glc-(1&lt;-&gt;1)-Cer(d18:1(4E)) + CMP-N-acetyl-beta-neuraminate = a ganglioside GM3 (d18:1(4E)) + CMP + H(+). The catalysed reaction is ganglioside GA2 (d18:1(4E)/18:0) + CMP-N-acetyl-beta-neuraminate = ganglioside GM2 (d18:1(4E)/18:0) + CMP + H(+). The enzyme catalyses a beta-D-Gal-(1&lt;-&gt;1')-ceramide + CMP-N-acetyl-beta-neuraminate = N-acetyl-alpha-neuraminosyl-(2-&gt;3)-beta-D-galactosyl-(1&lt;-&gt;1')-ceramide + CMP + H(+). It carries out the reaction ganglioside GA1 (d18:1(4E)/18:0) + CMP-N-acetyl-beta-neuraminate = ganglioside GM1 (d18:1(4E)/18:0) + CMP + H(+). In terms of biological role, transfers the sialyl group (N-acetyl-alpha-neuraminyl or NeuAc) from CMP-NeuAc to the non-reducing terminal galactose (Gal) of glycosphingolipids forming gangliosides (important molecules involved in the regulation of multiple cellular processes, including cell proliferation and differentiation, apoptosis, embryogenesis, development, and oncogenesis). Mainly involved in the biosynthesis of ganglioside GM3 but can also use different glycolipids as substrate acceptors such as D-galactosylceramide (GalCer), asialo-GM2 (GA2) and asialo-GM1 (GA1), although less preferentially than beta-D-Gal-(1-&gt;4)-beta-D-Glc-(1&lt;-&gt;1)-Cer (LacCer). In Pan troglodytes (Chimpanzee), this protein is Lactosylceramide alpha-2,3-sialyltransferase (ST3GAL5).